The following is a 181-amino-acid chain: ECF RNA polymerase sigma factor EcfG (181 aa).

The interval 15–77 (VPSLRAFAIS…FRSDYRKRRR (63 aa)) is sigma-70 factor domain-2. The segment at 103–155 (EEFRAALDKLPQDQREALILVGASGFSYEDAAAICGCAVGTIKSRVNRARSKL) is sigma-70 factor domain-4.

Belongs to the sigma-70 factor family. ECF subfamily.

In terms of biological role, sigma factors are initiation factors that promote the attachment of RNA polymerase to specific initiation sites and are then released. Regulates expression of hpnP under a variety of stresses, including high temperature, pH stress, and presence of nonionic osmolytes. This Rhodopseudomonas palustris (strain TIE-1) protein is ECF RNA polymerase sigma factor EcfG.